Here is a 431-residue protein sequence, read N- to C-terminus: 5-methylthioadenosine/S-adenosylhomocysteine deaminase (431 aa).

Positions 61 and 63 each coordinate Zn(2+). Glutamate 90 and histidine 183 together coordinate substrate. Histidine 210 is a Zn(2+) binding site. Substrate contacts are provided by glutamate 213 and aspartate 298. Aspartate 298 is a binding site for Zn(2+).

Belongs to the metallo-dependent hydrolases superfamily. MTA/SAH deaminase family. It depends on Zn(2+) as a cofactor.

The catalysed reaction is S-adenosyl-L-homocysteine + H2O + H(+) = S-inosyl-L-homocysteine + NH4(+). It carries out the reaction S-methyl-5'-thioadenosine + H2O + H(+) = S-methyl-5'-thioinosine + NH4(+). Catalyzes the deamination of 5-methylthioadenosine and S-adenosyl-L-homocysteine into 5-methylthioinosine and S-inosyl-L-homocysteine, respectively. Is also able to deaminate adenosine. This is 5-methylthioadenosine/S-adenosylhomocysteine deaminase from Halobacterium salinarum (strain ATCC 700922 / JCM 11081 / NRC-1) (Halobacterium halobium).